The following is a 37-amino-acid chain: Large ribosomal subunit protein bL36 (37 aa).

The protein belongs to the bacterial ribosomal protein bL36 family.

This chain is Large ribosomal subunit protein bL36, found in Legionella pneumophila subsp. pneumophila (strain Philadelphia 1 / ATCC 33152 / DSM 7513).